The sequence spans 363 residues: Chorismate synthase (363 aa).

Residues Arg48 and Arg54 each coordinate NADP(+). FMN-binding positions include 125–127 (RSS), 237–238 (NA), Gly277, 292–296 (KPTSS), and Arg318.

Belongs to the chorismate synthase family. Homotetramer. FMNH2 serves as cofactor.

It catalyses the reaction 5-O-(1-carboxyvinyl)-3-phosphoshikimate = chorismate + phosphate. It functions in the pathway metabolic intermediate biosynthesis; chorismate biosynthesis; chorismate from D-erythrose 4-phosphate and phosphoenolpyruvate: step 7/7. Its function is as follows. Catalyzes the anti-1,4-elimination of the C-3 phosphate and the C-6 proR hydrogen from 5-enolpyruvylshikimate-3-phosphate (EPSP) to yield chorismate, which is the branch point compound that serves as the starting substrate for the three terminal pathways of aromatic amino acid biosynthesis. This reaction introduces a second double bond into the aromatic ring system. The protein is Chorismate synthase of Pseudomonas putida (strain ATCC 700007 / DSM 6899 / JCM 31910 / BCRC 17059 / LMG 24140 / F1).